Consider the following 514-residue polypeptide: Cobyric acid synthase (514 aa).

The 200-residue stretch at 249–448 folds into the GATase cobBQ-type domain; that stretch reads LIDIAVIKLP…VHGVFDNDEI (200 aa). The Nucleophile role is filled by C330. Residue H440 is part of the active site.

This sequence belongs to the CobB/CobQ family. CobQ subfamily.

It participates in cofactor biosynthesis; adenosylcobalamin biosynthesis. Functionally, catalyzes amidations at positions B, D, E, and G on adenosylcobyrinic A,C-diamide. NH(2) groups are provided by glutamine, and one molecule of ATP is hydrogenolyzed for each amidation. In Ruminiclostridium cellulolyticum (strain ATCC 35319 / DSM 5812 / JCM 6584 / H10) (Clostridium cellulolyticum), this protein is Cobyric acid synthase.